A 268-amino-acid polypeptide reads, in one-letter code: Hydroxyethylthiazole kinase (268 aa).

M45 is a substrate binding site. The ATP site is built by R121 and T167. Residue G194 coordinates substrate.

This sequence belongs to the Thz kinase family. Mg(2+) is required as a cofactor.

The catalysed reaction is 5-(2-hydroxyethyl)-4-methylthiazole + ATP = 4-methyl-5-(2-phosphooxyethyl)-thiazole + ADP + H(+). Its pathway is cofactor biosynthesis; thiamine diphosphate biosynthesis; 4-methyl-5-(2-phosphoethyl)-thiazole from 5-(2-hydroxyethyl)-4-methylthiazole: step 1/1. In terms of biological role, catalyzes the phosphorylation of the hydroxyl group of 4-methyl-5-beta-hydroxyethylthiazole (THZ). The protein is Hydroxyethylthiazole kinase of Bacillus thuringiensis (strain Al Hakam).